The following is a 77-amino-acid chain: Sec-independent protein translocase protein TatA (77 aa).

The chain crosses the membrane as a helical span at residues 1 to 21; sequence MGSFSIWHWLIVLVIVMLVFG. Residues 50–77 are disordered; it reads ADASTQQKISGGQTLEGEAREKVEKTHS. Residues 53–62 are compositionally biased toward polar residues; sequence STQQKISGGQ. The span at 66–77 shows a compositional bias: basic and acidic residues; that stretch reads GEAREKVEKTHS.

Belongs to the TatA/E family. The Tat system comprises two distinct complexes: a TatABC complex, containing multiple copies of TatA, TatB and TatC subunits, and a separate TatA complex, containing only TatA subunits. Substrates initially bind to the TatABC complex, which probably triggers association of the separate TatA complex to form the active translocon.

It is found in the cell inner membrane. Functionally, part of the twin-arginine translocation (Tat) system that transports large folded proteins containing a characteristic twin-arginine motif in their signal peptide across membranes. TatA could form the protein-conducting channel of the Tat system. This chain is Sec-independent protein translocase protein TatA, found in Azoarcus sp. (strain BH72).